The sequence spans 344 residues: Trace amine-associated receptor 8b (344 aa).

At 1–33 (MTSNFSQATLQLCYENVNASCIKTPYSPGLRVL) the chain is on the extracellular side. Asn-4 and Asn-18 each carry an N-linked (GlcNAc...) asparagine glycan. Disulfide bonds link Cys-21-Cys-185 and Cys-104-Cys-189. A helical transmembrane segment spans residues 34 to 54 (LYMVFGFGAVLAVCGNLLVVI). Topologically, residues 55-67 (SVLHFKQLHSPAN) are cytoplasmic. The helical transmembrane segment at 68–88 (FLIASLASADFLVGISVMPFS) threads the bilayer. Topologically, residues 89–102 (MVRSIESCWYFGDT) are extracellular. A helical transmembrane segment spans residues 103–127 (FCSLHSCCDAAFCYSSLFHLCFISV). The Cytoplasmic segment spans residues 128–146 (DRYIAVTEPLVYPTKFTMS). The chain crosses the membrane as a helical span at residues 147 to 167 (VSGICISISWILPLVYSSAVF). Over 168–196 (YTGISATGIENLVSALNCVGGCQVAINQD) the chain is Extracellular. A helical transmembrane segment spans residues 197–217 (WVLISFLLFFIPTLVMIILYS). At 218–256 (KIFLVAKQQAVKIETSISGSKGESSLESHKARVAKRERK) the chain is on the cytoplasmic side. The chain crosses the membrane as a helical span at residues 257-277 (AAKTLGVTVMAFMVSWLPYTI). Over 278–295 (DTLIDAFMGFITPAYVYE) the chain is Extracellular. Residues 296 to 319 (ICGWIAYYNSAMNPLIYAFFYPWF) form a helical membrane-spanning segment. Topologically, residues 320–344 (RKAIKLILSGKILKGHSSTTSLFSE) are cytoplasmic.

The protein belongs to the G-protein coupled receptor 1 family.

It is found in the cell membrane. Its function is as follows. Olfactory receptor activated by trace amines. Trace amine compounds are enriched in animal body fluids and act on trace amine-associated receptors (TAARs) to elicit both intraspecific and interspecific innate behaviors. Ligand-binding causes a conformation change that triggers signaling via G(s)-class of G alpha proteins (GNAL or GNAS). In Rattus norvegicus (Rat), this protein is Trace amine-associated receptor 8b.